The primary structure comprises 159 residues: SsrA-binding protein (159 aa).

The interval 137–159 (KRQTEKERDWEREKQRLFQRDQR) is disordered.

This sequence belongs to the SmpB family.

Its subcellular location is the cytoplasm. Functionally, required for rescue of stalled ribosomes mediated by trans-translation. Binds to transfer-messenger RNA (tmRNA), required for stable association of tmRNA with ribosomes. tmRNA and SmpB together mimic tRNA shape, replacing the anticodon stem-loop with SmpB. tmRNA is encoded by the ssrA gene; the 2 termini fold to resemble tRNA(Ala) and it encodes a 'tag peptide', a short internal open reading frame. During trans-translation Ala-aminoacylated tmRNA acts like a tRNA, entering the A-site of stalled ribosomes, displacing the stalled mRNA. The ribosome then switches to translate the ORF on the tmRNA; the nascent peptide is terminated with the 'tag peptide' encoded by the tmRNA and targeted for degradation. The ribosome is freed to recommence translation, which seems to be the essential function of trans-translation. This Cellvibrio japonicus (strain Ueda107) (Pseudomonas fluorescens subsp. cellulosa) protein is SsrA-binding protein.